The chain runs to 309 residues: Isoflavone reductase homolog IRL (309 aa).

Residues 12 to 18 (GGTGYLG), Arg-37, and Lys-46 contribute to the NADP(+) site. The Proton acceptor role is filled by Lys-134. Residue Arg-138 coordinates NADP(+).

This sequence belongs to the NmrA-type oxidoreductase family. Isoflavone reductase subfamily. In terms of assembly, monomer.

The protein localises to the cytoplasm. It functions in the pathway alkaloid biosynthesis. In terms of biological role, reductase that may be involved in a late step of alkaloid biosynthesis. The chain is Isoflavone reductase homolog IRL from Zea mays (Maize).